The primary structure comprises 473 residues: 3-isopropylmalate dehydratase large subunit (473 aa).

3 residues coordinate [4Fe-4S] cluster: C351, C414, and C417.

It belongs to the aconitase/IPM isomerase family. LeuC type 1 subfamily. As to quaternary structure, heterodimer of LeuC and LeuD. Requires [4Fe-4S] cluster as cofactor.

The catalysed reaction is (2R,3S)-3-isopropylmalate = (2S)-2-isopropylmalate. It participates in amino-acid biosynthesis; L-leucine biosynthesis; L-leucine from 3-methyl-2-oxobutanoate: step 2/4. Catalyzes the isomerization between 2-isopropylmalate and 3-isopropylmalate, via the formation of 2-isopropylmaleate. This Paracidovorax citrulli (strain AAC00-1) (Acidovorax citrulli) protein is 3-isopropylmalate dehydratase large subunit.